The primary structure comprises 60 residues: Large ribosomal subunit protein bL33 (60 aa).

It belongs to the bacterial ribosomal protein bL33 family.

This chain is Large ribosomal subunit protein bL33, found in Chlorobium phaeovibrioides (strain DSM 265 / 1930) (Prosthecochloris vibrioformis (strain DSM 265)).